Here is a 496-residue protein sequence, read N- to C-terminus: Probable CtpA-like serine protease (496 aa).

The span at 1–16 (MDDKQHTSSSDDERAE) shows a compositional bias: basic and acidic residues. The disordered stretch occupies residues 1 to 27 (MDDKQHTSSSDDERAEIATSNQDQETN). A compositionally biased stretch (polar residues) spans 18–27 (ATSNQDQETN). The chain crosses the membrane as a helical span at residues 39–59 (FISILIGTILITAVITVVAYI). Residues 124–206 (TKSFNEGVSG…TEVTLTVQRG (83 aa)) form the PDZ domain. Active-site charge relay system residues include serine 329, aspartate 340, and lysine 354.

This sequence belongs to the peptidase S41A family.

The protein resides in the cell membrane. This Staphylococcus aureus (strain COL) protein is Probable CtpA-like serine protease.